A 321-amino-acid chain; its full sequence is Glucokinase (321 aa).

An ATP-binding site is contributed by 8 to 13; it reads GDVGGT.

This sequence belongs to the bacterial glucokinase family.

It localises to the cytoplasm. The enzyme catalyses D-glucose + ATP = D-glucose 6-phosphate + ADP + H(+). This is Glucokinase from Shigella dysenteriae serotype 1 (strain Sd197).